Here is a 335-residue protein sequence, read N- to C-terminus: 1D-myo-inositol 2-acetamido-2-deoxy-alpha-D-glucopyranoside deacetylase (335 aa).

Zn(2+)-binding residues include His19, Asp22, and His158.

It belongs to the MshB deacetylase family. Requires Zn(2+) as cofactor.

The catalysed reaction is 1D-myo-inositol 2-acetamido-2-deoxy-alpha-D-glucopyranoside + H2O = 1D-myo-inositol 2-amino-2-deoxy-alpha-D-glucopyranoside + acetate. Functionally, catalyzes the deacetylation of 1D-myo-inositol 2-acetamido-2-deoxy-alpha-D-glucopyranoside (GlcNAc-Ins) in the mycothiol biosynthesis pathway. This chain is 1D-myo-inositol 2-acetamido-2-deoxy-alpha-D-glucopyranoside deacetylase, found in Corynebacterium urealyticum (strain ATCC 43042 / DSM 7109).